The sequence spans 748 residues: CCR4-NOT transcription complex subunit 10-B (748 aa).

Residues methionine 1 to glycine 16 show a composition bias toward basic and acidic residues. Disordered stretches follow at residues methionine 1 to aspartate 25, lysine 483 to serine 524, and valine 605 to proline 634. 2 stretches are compositionally biased toward polar residues: residues glycine 487 to asparagine 509 and valine 605 to glutamate 615.

Belongs to the CNOT10 family. Component of the CCR4-NOT complex. cnot10 and cnot11 form a subcomplex docked to the cnot1 scaffold.

Its subcellular location is the cytoplasm. The protein resides in the nucleus. Component of the CCR4-NOT complex which is one of the major cellular mRNA deadenylases and is linked to various cellular processes including bulk mRNA degradation, miRNA-mediated repression, translational repression during translational initiation and general transcription regulation. Additional complex functions may be a consequence of its influence on mRNA expression. Is not required for association of CNOT7 to the CCR4-NOT complex. This Xenopus laevis (African clawed frog) protein is CCR4-NOT transcription complex subunit 10-B (cnot10-b).